Reading from the N-terminus, the 470-residue chain is MTDDTWGLLRKRLLKTVGQNNFTTWIEPLELDQVDGGVATFHVPTNFMGNYVSQNFADLILHEFNKSGEAVQRLAFKVAANSPTRPVQPTMSEAIEEPAPLQTTVVDQLGNQEGNTSVKSPPEDLQAAPLDPRFTFDSFVVGKPNELAHAAARRVAEGGPVTFNPLVLYGGVGLGKTHLMHAIAWELKERNPELNVLYLSAEQFMYRFVQALRERKMMDFKHLFRSVDVLMVDDVQFIAGKDSTQEEFFHTFNALVDQNKQIIISADRAPGEIKDLEDRVKSRLQCGLVVDLHPTDYELRLGILQTKVQQNRKNYPDLKIADGVLELLAHRISTNVRVLEGALTRLFAFASLVGREIDMDLTQDCLADVLRASERKITVEEIQRKVSEYYNIRMSDIIGPKRLRSYARPRQVAMYLCKQLTSRSLPEIGRRFGGRDHTTVMHGVRRIEELKTIDGQIAEDVEMLRRSLEA.

Positions 1-79 are domain I, interacts with DnaA modulators; sequence MTDDTWGLLR…AVQRLAFKVA (79 aa). The domain II stretch occupies residues 79 to 128; sequence AANSPTRPVQPTMSEAIEEPAPLQTTVVDQLGNQEGNTSVKSPPEDLQAA. Residues 129–350 are domain III, AAA+ region; it reads PLDPRFTFDS…GALTRLFAFA (222 aa). Residues glycine 173, glycine 175, lysine 176, and threonine 177 each coordinate ATP. Residues 351-470 form a domain IV, binds dsDNA region; the sequence is SLVGREIDMD…VEMLRRSLEA (120 aa).

It belongs to the DnaA family. Oligomerizes as a right-handed, spiral filament on DNA at oriC.

Its subcellular location is the cytoplasm. Its function is as follows. Plays an essential role in the initiation and regulation of chromosomal replication. ATP-DnaA binds to the origin of replication (oriC) to initiate formation of the DNA replication initiation complex once per cell cycle. Binds the DnaA box (a 9 base pair repeat at the origin) and separates the double-stranded (ds)DNA. Forms a right-handed helical filament on oriC DNA; dsDNA binds to the exterior of the filament while single-stranded (ss)DNA is stabiized in the filament's interior. The ATP-DnaA-oriC complex binds and stabilizes one strand of the AT-rich DNA unwinding element (DUE), permitting loading of DNA polymerase. After initiation quickly degrades to an ADP-DnaA complex that is not apt for DNA replication. Binds acidic phospholipids. The protein is Chromosomal replication initiator protein DnaA of Ruegeria sp. (strain TM1040) (Silicibacter sp.).